We begin with the raw amino-acid sequence, 213 residues long: 3-isopropylmalate dehydratase small subunit (213 aa).

Belongs to the LeuD family. LeuD type 1 subfamily. Heterodimer of LeuC and LeuD.

The catalysed reaction is (2R,3S)-3-isopropylmalate = (2S)-2-isopropylmalate. It functions in the pathway amino-acid biosynthesis; L-leucine biosynthesis; L-leucine from 3-methyl-2-oxobutanoate: step 2/4. Its function is as follows. Catalyzes the isomerization between 2-isopropylmalate and 3-isopropylmalate, via the formation of 2-isopropylmaleate. The polypeptide is 3-isopropylmalate dehydratase small subunit (Pseudomonas syringae pv. tomato (strain ATCC BAA-871 / DC3000)).